The chain runs to 522 residues: 2-isopropylmalate synthase (522 aa).

The region spanning 5-267 (VIIFDTTLRD…HTRINHQEIY (263 aa)) is the Pyruvate carboxyltransferase domain. Asp14, His202, His204, and Asn238 together coordinate Mn(2+). The interval 392–522 (RLDTFNVQSG…SQVKDQKETV (131 aa)) is regulatory domain.

Belongs to the alpha-IPM synthase/homocitrate synthase family. LeuA type 1 subfamily. Homodimer. Mn(2+) is required as a cofactor.

It localises to the cytoplasm. It carries out the reaction 3-methyl-2-oxobutanoate + acetyl-CoA + H2O = (2S)-2-isopropylmalate + CoA + H(+). It functions in the pathway amino-acid biosynthesis; L-leucine biosynthesis; L-leucine from 3-methyl-2-oxobutanoate: step 1/4. In terms of biological role, catalyzes the condensation of the acetyl group of acetyl-CoA with 3-methyl-2-oxobutanoate (2-ketoisovalerate) to form 3-carboxy-3-hydroxy-4-methylpentanoate (2-isopropylmalate). The sequence is that of 2-isopropylmalate synthase from Erwinia tasmaniensis (strain DSM 17950 / CFBP 7177 / CIP 109463 / NCPPB 4357 / Et1/99).